The chain runs to 130 residues: Small ribosomal subunit protein uS9 (130 aa).

This sequence belongs to the universal ribosomal protein uS9 family.

This Streptococcus agalactiae serotype Ia (strain ATCC 27591 / A909 / CDC SS700) protein is Small ribosomal subunit protein uS9.